The following is a 365-amino-acid chain: Chorismate synthase (365 aa).

R46 lines the NADP(+) pocket. FMN contacts are provided by residues 123–125, 241–242, G281, 296–300, and R322; these read RSS, NG, and KPTPS.

The protein belongs to the chorismate synthase family. Homotetramer. FMNH2 serves as cofactor.

The catalysed reaction is 5-O-(1-carboxyvinyl)-3-phosphoshikimate = chorismate + phosphate. It functions in the pathway metabolic intermediate biosynthesis; chorismate biosynthesis; chorismate from D-erythrose 4-phosphate and phosphoenolpyruvate: step 7/7. Catalyzes the anti-1,4-elimination of the C-3 phosphate and the C-6 proR hydrogen from 5-enolpyruvylshikimate-3-phosphate (EPSP) to yield chorismate, which is the branch point compound that serves as the starting substrate for the three terminal pathways of aromatic amino acid biosynthesis. This reaction introduces a second double bond into the aromatic ring system. The polypeptide is Chorismate synthase (Helicobacter pylori (strain HPAG1)).